We begin with the raw amino-acid sequence, 108 residues long: Sperm-egg fusion protein LLCFC1 (108 aa).

Positions 1-30 (MTSLGSQLHRATFLTALLLLLLLQVKGVKT) are cleaved as a signal peptide. Positions 39–49 (GDKSQKDKVSS) are enriched in basic and acidic residues. The segment at 39–64 (GDKSQKDKVSSEDQGEEEYEEHFEAS) is disordered.

Detected in testicular germ cells and spermatozoa (at protein level). Abundantly expressed in testis.

The protein resides in the secreted. Sperm protein required for fusion of sperm with the egg membrane during fertilization. In Mus musculus (Mouse), this protein is Sperm-egg fusion protein LLCFC1.